The primary structure comprises 243 residues: Transmembrane protein 174 (243 aa).

2 helical membrane passes run 40–60 (LLFS…MGWI) and 73–93 (LLGP…VCKF).

As to quaternary structure, interacts with SLC34A1; regulates SLC34A1 internalization by PTH and FGF23.

Its subcellular location is the endoplasmic reticulum membrane. The protein resides in the apical cell membrane. Functionally, regulator of plasma phosphate homeostasis. Decreases serum inorganic phosphate (Pi) uptake by regulating the sodium-phosphate cotransporter SLC34A1 trafficking by PTH and FGF23 in the kidney. In Pongo abelii (Sumatran orangutan), this protein is Transmembrane protein 174 (TMEM174).